The primary structure comprises 305 residues: UDP-3-O-acyl-N-acetylglucosamine deacetylase (305 aa).

The Zn(2+) site is built by His78, His237, and Asp241. His264 serves as the catalytic Proton donor.

It belongs to the LpxC family. It depends on Zn(2+) as a cofactor.

The catalysed reaction is a UDP-3-O-[(3R)-3-hydroxyacyl]-N-acetyl-alpha-D-glucosamine + H2O = a UDP-3-O-[(3R)-3-hydroxyacyl]-alpha-D-glucosamine + acetate. Its pathway is glycolipid biosynthesis; lipid IV(A) biosynthesis; lipid IV(A) from (3R)-3-hydroxytetradecanoyl-[acyl-carrier-protein] and UDP-N-acetyl-alpha-D-glucosamine: step 2/6. In terms of biological role, catalyzes the hydrolysis of UDP-3-O-myristoyl-N-acetylglucosamine to form UDP-3-O-myristoylglucosamine and acetate, the committed step in lipid A biosynthesis. In Cupriavidus metallidurans (strain ATCC 43123 / DSM 2839 / NBRC 102507 / CH34) (Ralstonia metallidurans), this protein is UDP-3-O-acyl-N-acetylglucosamine deacetylase.